Consider the following 140-residue polypeptide: Nucleoside diphosphate kinase (140 aa).

Residues Lys-11, Phe-59, Arg-87, Thr-93, Arg-104, and Asn-114 each contribute to the ATP site. The active-site Pros-phosphohistidine intermediate is the His-117.

It belongs to the NDK family. In terms of assembly, homotetramer. It depends on Mg(2+) as a cofactor.

The protein localises to the cytoplasm. The enzyme catalyses a 2'-deoxyribonucleoside 5'-diphosphate + ATP = a 2'-deoxyribonucleoside 5'-triphosphate + ADP. The catalysed reaction is a ribonucleoside 5'-diphosphate + ATP = a ribonucleoside 5'-triphosphate + ADP. Major role in the synthesis of nucleoside triphosphates other than ATP. The ATP gamma phosphate is transferred to the NDP beta phosphate via a ping-pong mechanism, using a phosphorylated active-site intermediate. The sequence is that of Nucleoside diphosphate kinase from Rhodopseudomonas palustris (strain BisB18).